The sequence spans 544 residues: MSSTKPPTTTNKRKRTSNAHDEAPAKRVPEASSSKVTLDDSQPAPATSSDAVLGARSAPGTDYERVPFSTLNLSPPTTAAIERMGFETMTEVQARTIPPLLAGKDVLGAARTGSGKTMAFLIPSVELLSTLRFKPVNGTGVIIISPTRELALQIFGVAKELMQGHSQTFGVLMGGANRKAEADKLVKGVNLIVATPGRLLDHLQNTKGFVFKNLKALVIDEADRILEIGFEEEMKQIIKLLPSENRQSMLFSATQTTKVTDLARISLRPGPLYINVDETKEASTADMLEQGYVVCESDQRFMLLFTFLKKNLKKKVIVFFSSCNSVKYHAELLNYIDVPVLDLHGKQKQQKRTNTFFEFINAPAGILLCTDVAARGLDIPKVDWIIQFDPPDDPRDYIHRVGRTARAGKSGKSLLFLLPSELGFLRFLKVAKVPLNEYQFPQKKVADVQKQLESLISKNHYLNTSARDGYRSYLQAYASYSLKKIFDVNKLDLAKVGKAFGFAVPPKVNISVGSVKAKKSRDEDESSDDDGQPKKAYYRNRGRK.

The segment covering 1–10 has biased composition (low complexity); sequence MSSTKPPTTT. Residues 1–59 form a disordered region; the sequence is MSSTKPPTTTNKRKRTSNAHDEAPAKRVPEASSSKVTLDDSQPAPATSSDAVLGARSAP. A compositionally biased stretch (basic and acidic residues) spans 18 to 29; sequence NAHDEAPAKRVP. The span at 31-50 shows a compositional bias: polar residues; sequence ASSSKVTLDDSQPAPATSSD. Positions 66–94 match the Q motif motif; it reads VPFSTLNLSPPTTAAIERMGFETMTEVQA. In terms of domain architecture, Helicase ATP-binding spans 97–273; sequence IPPLLAGKDV…RISLRPGPLY (177 aa). Residue 110–117 participates in ATP binding; sequence ARTGSGKT. The short motif at 220 to 223 is the DEAD box element; sequence DEAD. A Helicase C-terminal domain is found at 287-456; the sequence is MLEQGYVVCE…DVQKQLESLI (170 aa). The Bipartite nuclear localization signal motif lies at 299 to 315; that stretch reads QRFMLLFTFLKKNLKKK. The tract at residues 513–544 is disordered; it reads GSVKAKKSRDEDESSDDDGQPKKAYYRNRGRK.

This sequence belongs to the DEAD box helicase family. DDX18/HAS1 subfamily. In terms of assembly, associates in the nucleolus with the 60S and pre-60S ribosomal subunits.

The protein resides in the nucleus. It localises to the nucleolus. It carries out the reaction ATP + H2O = ADP + phosphate + H(+). ATP-dependent RNA helicase involved in 40S ribosomal subunit biogenesis. Required for the processing and cleavage of 35S pre-rRNA at sites A0, A1, and A2, leading to mature 18S rRNA. The sequence is that of ATP-dependent RNA helicase HAS1 (HAS1) from Cryptococcus neoformans var. neoformans serotype D (strain JEC21 / ATCC MYA-565) (Filobasidiella neoformans).